We begin with the raw amino-acid sequence, 117 residues long: Large ribosomal subunit protein uL18 (117 aa).

The protein belongs to the universal ribosomal protein uL18 family. As to quaternary structure, part of the 50S ribosomal subunit; part of the 5S rRNA/L5/L18/L25 subcomplex. Contacts the 5S and 23S rRNAs.

In terms of biological role, this is one of the proteins that bind and probably mediate the attachment of the 5S RNA into the large ribosomal subunit, where it forms part of the central protuberance. In Neisseria gonorrhoeae (strain ATCC 700825 / FA 1090), this protein is Large ribosomal subunit protein uL18.